We begin with the raw amino-acid sequence, 421 residues long: UDP-N-acetylglucosamine 1-carboxyvinyltransferase (421 aa).

A phosphoenolpyruvate-binding site is contributed by 22–23 (KN). Residue arginine 93 participates in UDP-N-acetyl-alpha-D-glucosamine binding. Catalysis depends on cysteine 117, which acts as the Proton donor. At cysteine 117 the chain carries 2-(S-cysteinyl)pyruvic acid O-phosphothioketal. Residues 122-126 (RPVDL), aspartate 308, and isoleucine 330 contribute to the UDP-N-acetyl-alpha-D-glucosamine site.

This sequence belongs to the EPSP synthase family. MurA subfamily.

It is found in the cytoplasm. The enzyme catalyses phosphoenolpyruvate + UDP-N-acetyl-alpha-D-glucosamine = UDP-N-acetyl-3-O-(1-carboxyvinyl)-alpha-D-glucosamine + phosphate. Its pathway is cell wall biogenesis; peptidoglycan biosynthesis. In terms of biological role, cell wall formation. Adds enolpyruvyl to UDP-N-acetylglucosamine. This chain is UDP-N-acetylglucosamine 1-carboxyvinyltransferase, found in Pseudomonas entomophila (strain L48).